A 543-amino-acid chain; its full sequence is Chaperonin GroEL (543 aa).

ATP-binding positions include 29-32 (TLGP), K50, 86-90 (DGTTT), G415, and D495.

The protein belongs to the chaperonin (HSP60) family. In terms of assembly, forms a cylinder of 14 subunits composed of two heptameric rings stacked back-to-back. Interacts with the co-chaperonin GroES.

The protein resides in the cytoplasm. The enzyme catalyses ATP + H2O + a folded polypeptide = ADP + phosphate + an unfolded polypeptide.. Its function is as follows. Together with its co-chaperonin GroES, plays an essential role in assisting protein folding. The GroEL-GroES system forms a nano-cage that allows encapsulation of the non-native substrate proteins and provides a physical environment optimized to promote and accelerate protein folding. The sequence is that of Chaperonin GroEL from Karelsulcia muelleri (strain GWSS) (Sulcia muelleri).